The primary structure comprises 166 residues: MSADGVFRDQGGFVTTTVDSFLRWAQSNSIWPLTFGLACCAIEMMNLASGPRYDIARFGSEAFRASPRQADLIFISGRVSNKMAPVIKRVYSQMLEPKWVVAFGACASSGGIFDNYAIMQGVDNLLPVDIYVPGCPPTPEAVIYAVQKLRDRIRKEDPRGGIIVRG.

[4Fe-4S] cluster is bound by residues C39, C40, C106, and C135.

It belongs to the complex I 20 kDa subunit family. NDH-1 is composed of 14 different subunits. Subunits NuoB, C, D, E, F, and G constitute the peripheral sector of the complex. It depends on [4Fe-4S] cluster as a cofactor.

The protein localises to the cell membrane. The enzyme catalyses a quinone + NADH + 5 H(+)(in) = a quinol + NAD(+) + 4 H(+)(out). In terms of biological role, NDH-1 shuttles electrons from NADH, via FMN and iron-sulfur (Fe-S) centers, to quinones in the respiratory chain. The immediate electron acceptor for the enzyme in this species is believed to be a menaquinone. Couples the redox reaction to proton translocation (for every two electrons transferred, four hydrogen ions are translocated across the cytoplasmic membrane), and thus conserves the redox energy in a proton gradient. This is NADH-quinone oxidoreductase subunit B 1 from Symbiobacterium thermophilum (strain DSM 24528 / JCM 14929 / IAM 14863 / T).